Reading from the N-terminus, the 870-residue chain is Dynamin-2 (870 aa).

Positions H28 to P294 constitute a Dynamin-type G domain. The G1 motif stretch occupies residues G38–S45. S41, G43, K44, S45, S46, R59, and G60 together coordinate GDP. A G2 motif region spans residues V64–R66. A G3 motif region spans residues D136 to G139. A G4 motif region spans residues T205–D208. The GDP site is built by K206, D208, and D211. At Y231 the chain carries Phosphotyrosine. A G5 motif region spans residues V235–S238. 3 residues coordinate GDP: N236, R237, and Q239. The residue at position 299 (K299) is an N6-acetyllysine. In terms of domain architecture, PH spans L519–V625. Y597 is subject to Phosphotyrosine. Residue K598 is modified to N6-acetyllysine. Residues V653–V744 enclose the GED domain. A disordered region spans residues T741–D870. Residue T755 is modified to Phosphothreonine. Residues W756–P767 show a composition bias toward polar residues. Position 764 is a phosphoserine; by CDK1 (S764). Residues S826–V846 show a composition bias toward pro residues. Residues P847–A864 are compositionally biased toward low complexity.

This sequence belongs to the TRAFAC class dynamin-like GTPase superfamily. Dynamin/Fzo/YdjA family. In terms of assembly, oligomerizes into a helical polymer that self-assembles around the vesicle membrane, when associated to the menbrane through lipid binding. Interacts with SHANK1 and SHANK2. Interacts with SNX9. Interacts (via C-terminal proline-rich domain (PRD)) with SNX18 (via SH3 domain); this interaction regulates ATG9A and ATG16L1 trafficking from recycling endosomes to sites of autophagosome formation. Interacts with SNX33 (via SH3 domain). Interacts with MYO1E (via SH3 domain). Interacts with PSTPIP1 (via SH3 domain). Interacts with CTNND2. Interacts (via C-terminal proline-rich domain (PRD)) with BIN1 (via SH3 domain); this interaction allows the recruitment of DNM2 to the membrane tubules and inhibits self-assembly-stimulated GTPase activity on the membrane. Interacts with GABARAP, GABARAPL1 and GABARAPL2. Interacts with MAP1LC3B (the lipidate and non-lipidated LC3 form); this interaction mediates recycling endosome scission leading to autophagosome release. Interacts with ITSN1. Interacts (via C-terminal proline-rich domain (PRD)) with SH3BP4 (via SH3 domain); this interaction controls the GTPase activity and is prevented by EGFR-induced tyrosine phosphorylation of either DNM2 or SH3BP4. Interacts with MYOF. May interact with PIK3C3. May be a component of a complex composed of RAB5A (in GDP-bound form), DYN2 and PIK3C3. Interacts with SDC4; this interaction is markedly enhanced at focal ahesion site upon induction of focal adhesions and stress-fiber formation. Interacts with ACTN1. Interacts with CTTN; this interaction stimulates the intrinsic GTPase activity of DNM2 and stabilizes the association of DNM2 and actin filaments; in addition this interaction is stimulated by ligand binding to the receptor, leading to the recruitment of the DNM2-CTTN complex to the sequestered receptor-ligand complex to its internalization. Interacts with NOSTRIN (via SH3 domain); this interaction allows the recruitment of NOS3 to dynamin-positive structures. Interacts with TUBG1; this interaction may participate in centrosome cohesion. In terms of processing, phosphorylation at Ser-848 by GSK3-alpha relieves the inhibition of BIN1 and promotes endocytosis. Phosphorylation at Ser-764 by CDK1 is greatly increased upon mitotic entry. It regulates cytokinesis downstream of calcineurin, and does not affect clathrin-mediated endocytosis. Dephosphorylated by calcineurin/PP2 during cytokinesis in a Ca(2+)- and calmodulin-dependent manner. Phosphorylated on tyrosine residues by EGFR. Phosphorylated on tyrosine residues after activation of SRC. As to expression, expressed in most tissues during embryonic development, including the peripheral nervous system although no expression is evident in skeletal muscle or heart.

It localises to the cytoplasm. Its subcellular location is the cytoskeleton. It is found in the cytoplasmic vesicle. The protein resides in the clathrin-coated vesicle. The protein localises to the cell projection. It localises to the uropodium. Its subcellular location is the endosome. It is found in the microtubule organizing center. The protein resides in the centrosome. The protein localises to the centriole. It localises to the recycling endosome. Its subcellular location is the phagocytic cup. It is found in the phagosome membrane. The protein resides in the podosome. The protein localises to the cell junction. It localises to the postsynaptic density. Its subcellular location is the synapse. It is found in the synaptosome. The protein resides in the midbody. The protein localises to the membrane. It localises to the clathrin-coated pit. The catalysed reaction is GTP + H2O = GDP + phosphate + H(+). In terms of biological role, catalyzes the hydrolysis of GTP and utilizes this energy to mediate vesicle scission at plasma membrane during endocytosis and filament remodeling at many actin structures during organization of the actin cytoskeleton. Plays an important role in vesicular trafficking processes, namely clathrin-mediated endocytosis (CME), exocytic and clathrin-coated vesicle from the trans-Golgi network, and PDGF stimulated macropinocytosis. During vesicular trafficking process, associates to the membrane, through lipid binding, and self-assembles into ring-like structure through oligomerization to form a helical polymer around the vesicle membrane and leading to vesicle scission. Plays a role in organization of the actin cytoskeleton by mediating arrangement of stress fibers and actin bundles in podocytes. During organization of the actin cytoskeleton, self-assembles into ring-like structure that directly bundles actin filaments to form typical membrane tubules decorated with dynamin spiral polymers. Self-assembly increases GTPase activity and the GTP hydrolysis causes the rapid depolymerization of dynamin spiral polymers, and results in dispersion of actin bundles. Remodels, through its interaction with CTTN, bundled actin filaments in a GTPase-dependent manner and plays a role in orchestrating the global actomyosin cytoskeleton. The interaction with CTTN stabilizes the interaction of DNM2 and actin filaments and stimulates the intrinsic GTPase activity that results in actin filament-barbed ends and increases the sensitivity of filaments in bundles to the actin depolymerizing factor, CFL1. Plays a role in the autophagy process, by participating in the formation of ATG9A vesicles destined for the autophagosomes through its interaction with SNX18, by mediating recycling endosome scission leading to autophagosome release through MAP1LC3B interaction. Also regulates maturation of apoptotic cell corpse-containing phagosomes by recruiting PIK3C3 to the phagosome membrane. Also plays a role in cytokinesis. May participate in centrosome cohesion through its interaction with TUBG1. Plays a role in the regulation of neuron morphology, axon growth and formation of neuronal growth cones. Involved in membrane tubulation. The sequence is that of Dynamin-2 from Mus musculus (Mouse).